The sequence spans 197 residues: Adenylate kinase isoenzyme 6 homolog FAP7 (197 aa).

ATP-binding residues include Gly17, Gly19, Lys20, Ser21, and Ser22. The interval 38–61 is NMPbind; it reads NISDFAKDNDCFEGYDEGRKSHIV. The tract at residues 113–123 is LID; sequence ARGYHDSKIEE. Arg114 serves as a coordination point for ATP. Residues 176-197 are disordered; the sequence is PDGVTNEYQGPRSDDEDDEDSE. Residue Tyr183 is modified to Phosphotyrosine. A phosphoserine mark is found at Ser188 and Ser196.

The protein belongs to the adenylate kinase family. AK6 subfamily. As to quaternary structure, interacts with small ribosomal subunit protein uS11B/RPS14B. Not a structural component of 43S pre-ribosomes, but transiently interacts with them by binding to uS11/RPS14.

It localises to the cytoplasm. The protein localises to the nucleus. The catalysed reaction is AMP + ATP = 2 ADP. It catalyses the reaction ATP + H2O = ADP + phosphate + H(+). Broad-specificity nucleoside monophosphate (NMP) kinase that catalyzes the reversible transfer of the terminal phosphate group between nucleoside triphosphates and monophosphates. Also has ATPase activity. Involved in the late cytoplasmic maturation steps of the 40S ribosomal particles, specifically 18S rRNA maturation. Required for cleavage of the 20S pre-rRNA at site D in the cytoplasm. While NMP activity is not required for ribosome maturation, ATPase activity is. Associates transiently with small ribosomal subunit protein uS11. ATP hydrolysis breaks the interaction with uS11. May temporarily remove uS11 from the ribosome to enable a conformational change of the ribosomal RNA that is needed for the final maturation step of the small ribosomal subunit. Promotes formation of the rotated state in 80S-like ribosomes, a key intermediate in translocation, thereby releasing the essential assembly factor DIM1 from pre-40S subunits. Its NMP activity may have a role in nuclear energy homeostasis. Involved in oxidative stress response. Required for POS9-dependent target gene transcription upon oxidative stress. In Saccharomyces cerevisiae (strain ATCC 204508 / S288c) (Baker's yeast), this protein is Adenylate kinase isoenzyme 6 homolog FAP7.